Consider the following 443-residue polypeptide: Glutamyl-tRNA reductase (443 aa).

Substrate is bound by residues 49-52 (TCNR), S109, 114-116 (ETQ), and Q120. C50 acts as the Nucleophile in catalysis. 189–194 (GAGKMG) lines the NADP(+) pocket.

Belongs to the glutamyl-tRNA reductase family. As to quaternary structure, homodimer.

The enzyme catalyses (S)-4-amino-5-oxopentanoate + tRNA(Glu) + NADP(+) = L-glutamyl-tRNA(Glu) + NADPH + H(+). The protein operates within porphyrin-containing compound metabolism; protoporphyrin-IX biosynthesis; 5-aminolevulinate from L-glutamyl-tRNA(Glu): step 1/2. Catalyzes the NADPH-dependent reduction of glutamyl-tRNA(Glu) to glutamate 1-semialdehyde (GSA). The polypeptide is Glutamyl-tRNA reductase (Bacillus mycoides (strain KBAB4) (Bacillus weihenstephanensis)).